The chain runs to 349 residues: Ribosomal RNA small subunit methyltransferase C (349 aa).

This sequence belongs to the methyltransferase superfamily. RsmC family. In terms of assembly, monomer.

The protein resides in the cytoplasm. It carries out the reaction guanosine(1207) in 16S rRNA + S-adenosyl-L-methionine = N(2)-methylguanosine(1207) in 16S rRNA + S-adenosyl-L-homocysteine + H(+). In terms of biological role, specifically methylates the guanine in position 1207 of 16S rRNA in the 30S particle. This is Ribosomal RNA small subunit methyltransferase C from Psychromonas ingrahamii (strain DSM 17664 / CCUG 51855 / 37).